The following is a 103-amino-acid chain: Co-chaperonin GroES (103 aa).

It belongs to the GroES chaperonin family. In terms of assembly, heptamer of 7 subunits arranged in a ring. Interacts with the chaperonin GroEL.

It is found in the cytoplasm. In terms of biological role, together with the chaperonin GroEL, plays an essential role in assisting protein folding. The GroEL-GroES system forms a nano-cage that allows encapsulation of the non-native substrate proteins and provides a physical environment optimized to promote and accelerate protein folding. GroES binds to the apical surface of the GroEL ring, thereby capping the opening of the GroEL channel. The chain is Co-chaperonin GroES from Rippkaea orientalis (strain PCC 8801 / RF-1) (Cyanothece sp. (strain PCC 8801)).